Here is a 435-residue protein sequence, read N- to C-terminus: Eukaryotic translation initiation factor 3 subunit E (435 aa).

The PCI domain maps to 241–409 (TDMFFSPSYI…GTVIMNHPPQ (169 aa)).

The protein belongs to the eIF-3 subunit E family. In terms of assembly, component of the eukaryotic translation initiation factor 3 (eIF-3) complex.

Its subcellular location is the cytoplasm. Component of the eukaryotic translation initiation factor 3 (eIF-3) complex, which is involved in protein synthesis of a specialized repertoire of mRNAs and, together with other initiation factors, stimulates binding of mRNA and methionyl-tRNAi to the 40S ribosome. The eIF-3 complex specifically targets and initiates translation of a subset of mRNAs involved in cell proliferation. In Phaeosphaeria nodorum (strain SN15 / ATCC MYA-4574 / FGSC 10173) (Glume blotch fungus), this protein is Eukaryotic translation initiation factor 3 subunit E.